Here is a 629-residue protein sequence, read N- to C-terminus: tRNA uridine 5-carboxymethylaminomethyl modification enzyme MnmG (629 aa).

FAD is bound by residues 13–18 (GGGHAG), Val-125, and Ser-180. Residue 273–287 (GPRYCPSIEDKIHRF) participates in NAD(+) binding. Gln-370 is an FAD binding site.

It belongs to the MnmG family. In terms of assembly, homodimer. Heterotetramer of two MnmE and two MnmG subunits. FAD serves as cofactor.

The protein resides in the cytoplasm. Its function is as follows. NAD-binding protein involved in the addition of a carboxymethylaminomethyl (cmnm) group at the wobble position (U34) of certain tRNAs, forming tRNA-cmnm(5)s(2)U34. In Shewanella oneidensis (strain ATCC 700550 / JCM 31522 / CIP 106686 / LMG 19005 / NCIMB 14063 / MR-1), this protein is tRNA uridine 5-carboxymethylaminomethyl modification enzyme MnmG.